Reading from the N-terminus, the 374-residue chain is Transcription factor NF-E2 45 kDa subunit (374 aa).

Disordered regions lie at residues 1–21 (MSPC…IPEP) and 40–61 (LNAP…GPPP). Residues 1-83 (MSPCPPQQSR…PGFPLPAPPY (83 aa)) are required for interaction with MAPK8. The interval 1-207 (MSPCPPQQSR…PPAETPLALE (207 aa)) is transactivation domain. The span at 48-61 (FEPPAPVPYPGPPP) shows a compositional bias: pro residues. Short sequence motifs (PXY motif) lie at residues 61–65 (PPPSY) and 79–83 (PAPPY). The interval 132 to 165 (LSAGPSKPQEDPESDSGLSLNYSDAESLELEGTE) is disordered. S158 carries the post-translational modification Phosphoserine; by MAPK8. At S171 the chain carries Phosphoserine; by PKA. Positions 207-227 (EPSSGPVRAKPTARGEAGSRD) are disordered. One can recognise a bZIP domain in the interval 267–330 (LVRDIRRRGK…EVMRQQLTDL (64 aa)). The tract at residues 269-288 (RDIRRRGKNKVAAQNCRKRK) is basic motif. Positions 292 to 299 (IVQLEREL) are leucine-zipper. K369 is covalently cross-linked (Glycyl lysine isopeptide (Lys-Gly) (interchain with G-Cter in SUMO); alternate). A Glycyl lysine isopeptide (Lys-Gly) (interchain with G-Cter in SUMO1); alternate cross-link involves residue K369.

The protein belongs to the bZIP family. CNC subfamily. As to quaternary structure, homodimer; can bind DNA as a homodimer. Erythroid transcription activator nuclear factor erythroid-derived 2 (NF-E2), composed of a heterodimer of NFE2 and MAFK, possesses transactivation activity on beta-globin. Also forms high affinity heterodimer with MAFG; the interaction promotes erythropoiesis. Interacts (via the PXY motif 1) with ITCH (via the WW 1 domain); the interaction promotes 'Lys63'-linked ubiquitination of NFE2, translocates it to the cytoplasm and inhibits its transactivation activity. Interacts with KMT2D/MLL2; the interaction promotes transactivation of the beta-globin locus. Interacts with MAPK8 (phosphorylated form); the interaction leads to phosphorylation of NFE2 in undifferentiated cells. In terms of processing, phosphorylated on serine residues. In undifferentiated erythrocytes, phosphorylated by MAPK8 which then leads to ubiquitination and protein degradation. Post-translationally, sumoylated. Sumoylation is required for translocation to nuclear bodies PODs, anchoring to the gene loci, and transactivation of the beta-globin gene. Ubiquitinated mainly by 'Lys63'-linked ubiquitin. Polyubiquitination with 'Lys63'-linked ubiquitin by ITCH retains NFE2 in the cytoplasm preventing its transactivation activity. In undifferentiated erythrocyte, is ubiquitinated after MAPK8-mediatd phosphorylation leading to protein degradation.

The protein resides in the nucleus. It localises to the cytoplasm. Component of the NF-E2 complex essential for regulating erythroid and megakaryocytic maturation and differentiation. Binds to the hypersensitive site 2 (HS2) of the beta-globin control region (LCR). This subunit (NFE2) recognizes the TCAT/C sequence of the AP-1-like core palindrome present in a number of erythroid and megakaryocytic gene promoters. Requires MAFK or other small MAF proteins for binding to the NF-E2 motif. May play a role in all aspects of hemoglobin production from globin and heme synthesis to procurement of iron. The sequence is that of Transcription factor NF-E2 45 kDa subunit (NFE2) from Bos taurus (Bovine).